The sequence spans 258 residues: UPF0246 protein VS_0505 (258 aa).

This sequence belongs to the UPF0246 family.

This chain is UPF0246 protein VS_0505, found in Vibrio atlanticus (strain LGP32) (Vibrio splendidus (strain Mel32)).